The primary structure comprises 427 residues: Gamma-glutamyl phosphate reductase (427 aa).

This sequence belongs to the gamma-glutamyl phosphate reductase family.

Its subcellular location is the cytoplasm. The catalysed reaction is L-glutamate 5-semialdehyde + phosphate + NADP(+) = L-glutamyl 5-phosphate + NADPH + H(+). The protein operates within amino-acid biosynthesis; L-proline biosynthesis; L-glutamate 5-semialdehyde from L-glutamate: step 2/2. Catalyzes the NADPH-dependent reduction of L-glutamate 5-phosphate into L-glutamate 5-semialdehyde and phosphate. The product spontaneously undergoes cyclization to form 1-pyrroline-5-carboxylate. The polypeptide is Gamma-glutamyl phosphate reductase (Streptomyces griseus subsp. griseus (strain JCM 4626 / CBS 651.72 / NBRC 13350 / KCC S-0626 / ISP 5235)).